The primary structure comprises 89 residues: Putative membrane protein insertion efficiency factor (89 aa).

Residues 68–89 form a disordered region; sequence VPPPNSDARNAPHEAEASSHRL. The segment covering 77-89 has biased composition (basic and acidic residues); that stretch reads NAPHEAEASSHRL.

It belongs to the UPF0161 family.

Its subcellular location is the cell inner membrane. Functionally, could be involved in insertion of integral membrane proteins into the membrane. In Burkholderia mallei (strain SAVP1), this protein is Putative membrane protein insertion efficiency factor.